The chain runs to 762 residues: 5-methyltetrahydropteroyltriglutamate--homocysteine methyltransferase (762 aa).

5-methyltetrahydropteroyltri-L-glutamate is bound by residues 17-20 (REWK) and Lys-111. L-homocysteine-binding positions include 435-437 (IGS) and Glu-488. L-methionine is bound by residues 435-437 (IGS) and Glu-488. Residues 519 to 520 (RC) and Trp-565 contribute to the 5-methyltetrahydropteroyltri-L-glutamate site. Asp-603 is a binding site for L-homocysteine. Residue Asp-603 participates in L-methionine binding. Glu-609 serves as a coordination point for 5-methyltetrahydropteroyltri-L-glutamate. Residues His-645, Cys-647, and Glu-669 each coordinate Zn(2+). His-698 acts as the Proton donor in catalysis. A Zn(2+)-binding site is contributed by Cys-730.

It belongs to the vitamin-B12 independent methionine synthase family. Zn(2+) serves as cofactor.

It catalyses the reaction 5-methyltetrahydropteroyltri-L-glutamate + L-homocysteine = tetrahydropteroyltri-L-glutamate + L-methionine. It participates in amino-acid biosynthesis; L-methionine biosynthesis via de novo pathway; L-methionine from L-homocysteine (MetE route): step 1/1. Its function is as follows. Catalyzes the transfer of a methyl group from 5-methyltetrahydrofolate to homocysteine resulting in methionine formation. The sequence is that of 5-methyltetrahydropteroyltriglutamate--homocysteine methyltransferase from Bacillus anthracis (strain CDC 684 / NRRL 3495).